Consider the following 198-residue polypeptide: Peroxiredoxin-2 (198 aa).

Ala-2 is modified (N-acetylalanine). The Thioredoxin domain maps to 6–164 (AQIGKSAPDF…ALRLVQAFQY (159 aa)). Ser-11 is subject to Phosphoserine. Cys-51 acts as the Cysteine sulfenic acid (-SOH) intermediate in catalysis. Ser-112 carries the post-translational modification Phosphoserine. Position 182 is a phosphothreonine (Thr-182). The residue at position 196 (Lys-196) is an N6-acetyllysine.

Belongs to the peroxiredoxin family. AhpC/Prx1 subfamily. As to quaternary structure, homodimer; disulfide-linked, upon oxidation. 5 homodimers assemble to form a ring-like decamer. Interacts with TIPIN. The enzyme can be inactivated by further oxidation of the cysteine sulfenic acid (C(P)-SOH) to sulphinic acid (C(P)-SO2H) instead of its condensation to a disulfide bond. It can be reactivated by forming a transient disulfide bond with sulfiredoxin SRXN1, which reduces the cysteine sulfinic acid in an ATP- and Mg-dependent manner. Post-translationally, acetylation increases resistance to transition to high molecular-mass complexes. Deacetylated by HDAC6 which decreases reducing activity. As to expression, widely expressed with highest levels in bone marrow. High levels also found in heart, brain, kidney and skeletal muscle. Lower levels in liver, lung and thymus.

It is found in the cytoplasm. The catalysed reaction is a hydroperoxide + [thioredoxin]-dithiol = an alcohol + [thioredoxin]-disulfide + H2O. Thiol-specific peroxidase that catalyzes the reduction of hydrogen peroxide and organic hydroperoxides to water and alcohols, respectively. Plays a role in cell protection against oxidative stress by detoxifying peroxides and as sensor of hydrogen peroxide-mediated signaling events. Might participate in the signaling cascades of growth factors and tumor necrosis factor-alpha by regulating the intracellular concentrations of H(2)O(2). The chain is Peroxiredoxin-2 (Prdx2) from Mus musculus (Mouse).